Reading from the N-terminus, the 1541-residue chain is Regulator of G-protein signaling loco (1541 aa).

The disordered stretch occupies residues methionine 1–tyrosine 66. Residues threonine 11–glycine 36 are compositionally biased toward low complexity. Over residues isoleucine 40–glutamine 53 the composition is skewed to polar residues. The PDZ domain maps to threonine 71–tyrosine 148. The segment at alanine 182–proline 222 is disordered. Residues valine 201–threonine 214 are compositionally biased toward basic and acidic residues. One can recognise a PID domain in the interval alanine 247 to threonine 423. 2 disordered regions span residues glycine 449–aspartate 473 and serine 708–asparagine 761. Polar residues-rich tracts occupy residues proline 457–aspartate 473 and glutamate 744–asparagine 761. Residues serine 827–valine 943 form the RGS domain. Residues serine 978–arginine 1004 are disordered. The span at arginine 987–serine 999 shows a compositional bias: basic residues. 2 RBD domains span residues serine 1072–arginine 1142 and valine 1143–valine 1213. The segment at aspartate 1258–valine 1327 is disordered. Residues methionine 1273–leucine 1285 are compositionally biased toward polar residues. Residues threonine 1312–glutamine 1325 are compositionally biased toward low complexity. Residues glutamine 1354–glutamate 1376 enclose the GoLoco domain. The disordered stretch occupies residues lysine 1410–lysine 1513. The segment covering alanine 1460 to lysine 1469 has biased composition (pro residues). Over residues proline 1483–threonine 1499 the composition is skewed to polar residues.

Interacts (via GoLoco and RGS domains) with Galphai (via GDP- or GTP-bound forms). In terms of tissue distribution, expressed in surface and longitudinal glial cells, gut and heart (at protein level).

Its subcellular location is the cytoplasm. It is found in the cell membrane. The protein localises to the apical cell membrane. Acts as a regulator of G protein signaling (RGS). Modulates G protein alpha subunits nucleotide exchange and hydrolysis activities by functioning either as a GTPase-activating protein (GAP), thereby driving G protein alpha subunits into their inactive GDP-bound form, or as a GDP-dissociation inhibitor (GDI). Confers GDI and GAP activities on G(i) alpha subunit Galphai. Confers GAP activity on G(o)-alpha subunit Galphao and G(i) alpha subunit Galphai. Involved in the dorsal-ventral axis formation of the egg. Acts as a G-protein signaling for glial cell differentiation during embryogenesis; Galphai, Galphao and the G-protein coupled receptor, moody, are required in the surface glia to achieve effective insulation of the nerve cord. May be essential for nurse cell dumping during oogenesis. Required in neuroblast asymmetrical cell division. Plays a role in stress resistance and life span control. The protein is Regulator of G-protein signaling loco (loco) of Drosophila melanogaster (Fruit fly).